The primary structure comprises 741 residues: Nuclear pore complex protein Nup88 (741 aa).

Position 2 is an N-acetylalanine (Ala-2). Phosphoserine occurs at positions 35, 50, 379, 437, 442, and 517. Position 525 is a phosphothreonine (Thr-525). Ser-540 carries the phosphoserine modification. Residues 585–651 (EEIQRRVKLL…KLLHSFHSEL (67 aa)) adopt a coiled-coil conformation. Position 698 is a phosphoserine (Ser-698).

As to quaternary structure, interacts with NUP214/CAN. Interacts with NUP62 and NUP98. As to expression, ubiquitous.

The protein resides in the nucleus. It localises to the nuclear pore complex. Functionally, component of nuclear pore complex. This is Nuclear pore complex protein Nup88 (NUP88) from Homo sapiens (Human).